The following is a 330-amino-acid chain: Glycerol-3-phosphate dehydrogenase [NAD(P)+] (330 aa).

3 residues coordinate NADPH: tryptophan 11, arginine 33, and lysine 105. Residues lysine 105, glycine 133, and serine 135 each coordinate sn-glycerol 3-phosphate. Alanine 137 contacts NADPH. Residues lysine 188, aspartate 241, serine 251, arginine 252, and asparagine 253 each coordinate sn-glycerol 3-phosphate. Lysine 188 functions as the Proton acceptor in the catalytic mechanism. NADPH is bound at residue arginine 252. NADPH contacts are provided by valine 276 and glutamate 278.

Belongs to the NAD-dependent glycerol-3-phosphate dehydrogenase family.

The protein resides in the cytoplasm. The catalysed reaction is sn-glycerol 3-phosphate + NAD(+) = dihydroxyacetone phosphate + NADH + H(+). The enzyme catalyses sn-glycerol 3-phosphate + NADP(+) = dihydroxyacetone phosphate + NADPH + H(+). It participates in membrane lipid metabolism; glycerophospholipid metabolism. Functionally, catalyzes the reduction of the glycolytic intermediate dihydroxyacetone phosphate (DHAP) to sn-glycerol 3-phosphate (G3P), the key precursor for phospholipid synthesis. In Acidovorax sp. (strain JS42), this protein is Glycerol-3-phosphate dehydrogenase [NAD(P)+].